We begin with the raw amino-acid sequence, 543 residues long: Limonene hydroxylase (543 aa).

Residues Val-232–Leu-464 form the Sigma-54 factor interaction domain. ATP contacts are provided by residues Gly-260–Glu-267 and Ala-324–Glu-333.

The catalysed reaction is (4S)-limonene + reduced [NADPH--hemoprotein reductase] + O2 = (1S,5R)-carveol + oxidized [NADPH--hemoprotein reductase] + H2O + H(+). The enzyme catalyses (4S)-limonene + reduced [NADPH--hemoprotein reductase] + O2 = (4S)-perillyl alcohol + oxidized [NADPH--hemoprotein reductase] + H2O + H(+). It catalyses the reaction perillyl alcohol + NAD(+) = perillyl aldehyde + NADH + H(+). It carries out the reaction (1S,5R)-carveol + NADP(+) = (R)-carvone + NADPH + H(+). Functionally, involved in limonene hydroxylation to a mixture of carveol and perillyl alcohol as well as in dehydrogenation of these products to carvone and perillyl aldehyde. Aromatic alcohols containing an isopropyl or isopropenyl group at ring position 4 also served as substrates for the dehydrogenase activity. The polypeptide is Limonene hydroxylase (Geobacillus stearothermophilus (Bacillus stearothermophilus)).